The primary structure comprises 374 residues: Fibrous sheath-interacting protein 1 (374 aa).

3 disordered regions span residues 1–80 (MEVY…LEVL), 95–120 (EMTD…PEMR), and 225–244 (EVGQ…HSKS). 3 stretches are compositionally biased toward basic and acidic residues: residues 12 to 28 (PHSR…RDKS), 45 to 55 (DIIKGRLDEIS), and 65 to 77 (ENRR…HRSL). Positions 262–290 (SVFLTQQEKERIEDLLKDLEEELLEEPQL) form a coiled coil.

It belongs to the FSIP1 family.

In Danio rerio (Zebrafish), this protein is Fibrous sheath-interacting protein 1 (fsip1).